The chain runs to 1113 residues: StAR-related lipid transfer protein 13 (1113 aa).

An N-acetylmethionine modification is found at Met1. The SAM domain maps to 55 to 122 (QQEIEAKEAC…LNKCASMKLD (68 aa)). 2 disordered regions span residues 162-254 (LLPR…PTRA) and 307-346 (PNGD…VSTP). Positions 177 to 188 (MRNTTSSESVLT) are enriched in polar residues. Composition is skewed to low complexity over residues 197–213 (SIHS…SQPG) and 326–344 (SGKS…SGVS). A Phosphoserine modification is found at Ser411. Over residues 536 to 549 (FEGNSVSEGRTTPS) the composition is skewed to polar residues. The interval 536–580 (FEGNSVSEGRTTPSDVERDVTSLNESEPPGVRDRRDSGVGASLTR) is disordered. In terms of domain architecture, Rho-GAP spans 663–868 (VPLIVHVQRT…HMIMECDRLF (206 aa)). The START domain occupies 899–1107 (LEESGATFHT…RNSFQPLIAE (209 aa)).

Homodimer. Interacts with TAX1BP1. In terms of tissue distribution, ubiquitously expressed. Underexpressed in hepatocellular carcinoma cells and some breast cancer cell lines.

It is found in the cytoplasm. The protein resides in the membrane. The protein localises to the mitochondrion membrane. Its subcellular location is the lipid droplet. GTPase-activating protein for RhoA, and perhaps for Cdc42. May be involved in regulation of cytoskeletal reorganization, cell proliferation and cell motility. Acts a tumor suppressor in hepatocellular carcinoma cells. The protein is StAR-related lipid transfer protein 13 (STARD13) of Homo sapiens (Human).